The following is a 465-amino-acid chain: Argininosuccinate lyase (465 aa).

It belongs to the lyase 1 family. Argininosuccinate lyase subfamily.

Its subcellular location is the cytoplasm. The catalysed reaction is 2-(N(omega)-L-arginino)succinate = fumarate + L-arginine. The protein operates within amino-acid biosynthesis; L-arginine biosynthesis; L-arginine from L-ornithine and carbamoyl phosphate: step 3/3. This is Argininosuccinate lyase from Deinococcus geothermalis (strain DSM 11300 / CIP 105573 / AG-3a).